The primary structure comprises 992 residues: MGPPSSSGFYVSRAVALLLAALAAALLLALAVLAALYGRCARVQPSDLHHSGVPDAASSPRGTQEEPLPTWPPRPTREPAGTATPGHWRPPGPWDQLRLPPWLVPLHYELELWPRLRPNEFQSPTLSFTGRVNITVRCAAATARLLLHSLFLDCESAEVRGPLSSGPRDGALGRVPVDDVWFAFDMQYMVLELGATLQPGSRYELQLSFSGLVYRDLREGLFFSIYTDQGERRALLASQMEPTFARSVFPCFDEPALKATFNITIIHHPSYGALSNMPKLGQSEKRDVNGSVWTVTTFSTTPHMPTYLVALAICDYDHVSRTERGQEIRIWARKDAIANGNAAFALNITGPIFSFLEDLFNISYPLPKTDIIALPTFDNSAMENWGLLIFDESLLLMQPNDQVTDKKAVISFILSHEIGHQWFGNLVTMNWWNDIWLKEGFASYFEFGVINYFNPKFRRNEVFFSNILHHVLSEDHALVSRAVSLKVENFTETSEINELFDLFTYNKGASLARMLSSFLNENVFISALKSYLKTFSYSNAEQDDLWRHFQMVVDNQSKILLPAPVKSIMDRWTHQSGFPVITLNVSTGAMKQEPFYLGKVQNQTLLTHNDTWIVPILWIKNGITQSLVWLDKSSEIFPEMQVSDSDHDWVILNLNMTGYYRVNYDKVGWKKLKQQLEKDPKAIPVIHRLQMIDDAFSLSKNNYVEIETALDLTKYLAEEDEIIVWYAVLVNLVTKDLVFDVNNYDMYPLLKKYLLKRLISIWNMYSTVIRENVAALQDDYLALVALEKLFETACWLGLEDCLQLSRELFKNWTNHPENEIPYPIKSVVLCYGVAFGSDEEWDFLLNMYSNKTKEEERIQLTYAMSCSKDPWILHRYLEYAVTAAPFTFNETNIMEVVAESEVGRYIVKDFLINNWQAVSERYGTQSLVNLMYIIGRTISTDLQITELQQFFGNMLEEHQKLTVRAKLQTIKNKNLENKKRNARMTAWLRKNT.

The Cytoplasmic portion of the chain corresponds to 2-13; sequence GPPSSSGFYVSR. Residues 14 to 34 form a helical; Signal-anchor for type II membrane protein membrane-spanning segment; sequence AVALLLAALAAALLLALAVLA. Residues 35-992 lie on the Extracellular side of the membrane; the sequence is ALYGRCARVQ…RMTAWLRKNT (958 aa). The disordered stretch occupies residues 47-92; the sequence is DLHHSGVPDAASSPRGTQEEPLPTWPPRPTREPAGTATPGHWRPPG. Asparagine 133 carries N-linked (GlcNAc...) asparagine glycosylation. Glutamate 241 lines the substrate pocket. N-linked (GlcNAc...) asparagine glycans are attached at residues asparagine 262, asparagine 289, asparagine 347, and asparagine 361. Residue 380–384 coordinates substrate; it reads SAMEN. Histidine 416 contacts Zn(2+). Glutamate 417 acts as the Proton acceptor in catalysis. 2 residues coordinate Zn(2+): histidine 420 and glutamate 439. The active-site Proton donor is tyrosine 505. Asparagine 555, asparagine 584, asparagine 602, asparagine 609, asparagine 655, asparagine 811, asparagine 850, and asparagine 889 each carry an N-linked (GlcNAc...) asparagine glycan.

This sequence belongs to the peptidase M1 family. Zn(2+) is required as a cofactor. In terms of tissue distribution, expressed in skin. Expression levels do not differ between dark and light skin areas.

It is found in the membrane. Metalloprotease which may be important for placentation by regulating biological activity of key peptides at the embryo-maternal interface. Involved in coat pigmentation patterns. During skin development, may be required to establish the periodicity of tabby markings, initiating a pre-pattern at or before hair follicle development. In Felis catus (Cat), this protein is Aminopeptidase Q (LVRN).